The primary structure comprises 97 residues: Large ribosomal subunit protein uL23 (97 aa).

The protein belongs to the universal ribosomal protein uL23 family. As to quaternary structure, part of the 50S ribosomal subunit. Contacts protein L29, and trigger factor when it is bound to the ribosome.

One of the early assembly proteins it binds 23S rRNA. One of the proteins that surrounds the polypeptide exit tunnel on the outside of the ribosome. Forms the main docking site for trigger factor binding to the ribosome. The protein is Large ribosomal subunit protein uL23 of Bartonella henselae (strain ATCC 49882 / DSM 28221 / CCUG 30454 / Houston 1) (Rochalimaea henselae).